Reading from the N-terminus, the 466-residue chain is Argininosuccinate lyase (466 aa).

The protein belongs to the lyase 1 family. Argininosuccinate lyase subfamily.

The protein localises to the cytoplasm. It carries out the reaction 2-(N(omega)-L-arginino)succinate = fumarate + L-arginine. It functions in the pathway amino-acid biosynthesis; L-arginine biosynthesis; L-arginine from L-ornithine and carbamoyl phosphate: step 3/3. This chain is Argininosuccinate lyase, found in Brucella anthropi (strain ATCC 49188 / DSM 6882 / CCUG 24695 / JCM 21032 / LMG 3331 / NBRC 15819 / NCTC 12168 / Alc 37) (Ochrobactrum anthropi).